A 398-amino-acid polypeptide reads, in one-letter code: Digeranylgeranylglycerophospholipid reductase (398 aa).

The FAD site is built by A15, E34, C45, A46, G48, R99, A123, D280, G292, and I293. Position 372 (V372) interacts with a 2,3-bis-O-(geranylgeranyl)-sn-glycerol 1-phospholipid.

Belongs to the geranylgeranyl reductase family. DGGGPL reductase subfamily. Requires FAD as cofactor.

It catalyses the reaction a 2,3-bis-O-phytanyl-sn-glycerol 1-phospholipid + 8 oxidized 2[4Fe-4S]-[ferredoxin] = a 2,3-bis-O-(geranylgeranyl)-sn-glycerol 1-phospholipid + 8 reduced 2[4Fe-4S]-[ferredoxin] + 16 H(+). The catalysed reaction is 2,3-bis-O-(phytanyl)-sn-glycerol 1-phosphate + 8 oxidized 2[4Fe-4S]-[ferredoxin] = 2,3-bis-O-(geranylgeranyl)-sn-glycerol 1-phosphate + 8 reduced 2[4Fe-4S]-[ferredoxin] + 16 H(+). The enzyme catalyses a 2,3-bis-O-phytanyl-sn-glycerol 1-phospholipid + 8 A = a 2,3-bis-O-(geranylgeranyl)-sn-glycerol 1-phospholipid + 8 AH2. It carries out the reaction CDP-2,3-bis-O-(geranylgeranyl)-sn-glycerol + 8 AH2 = CDP-2,3-bis-O-(phytanyl)-sn-glycerol + 8 A. It catalyses the reaction archaetidylserine + 8 AH2 = 2,3-bis-O-phytanyl-sn-glycero-3-phospho-L-serine + 8 A. It functions in the pathway membrane lipid metabolism; glycerophospholipid metabolism. Functionally, is involved in the reduction of 2,3-digeranylgeranylglycerophospholipids (unsaturated archaeols) into 2,3-diphytanylglycerophospholipids (saturated archaeols) in the biosynthesis of archaeal membrane lipids. Catalyzes the formation of archaetidic acid (2,3-di-O-phytanyl-sn-glyceryl phosphate) from 2,3-di-O-geranylgeranylglyceryl phosphate (DGGGP) via the hydrogenation of each double bond of the isoprenoid chains. Is also probably able to reduce double bonds of geranyl groups in CDP-2,3-bis-O-(geranylgeranyl)-sn-glycerol and archaetidylserine, thus acting at various stages in the biosynthesis of archaeal membrane lipids. In Methanoculleus marisnigri (strain ATCC 35101 / DSM 1498 / JR1), this protein is Digeranylgeranylglycerophospholipid reductase.